The following is a 339-amino-acid chain: Glyceraldehyde-3-phosphate dehydrogenase (339 aa).

Residues 12–13 (RI), aspartate 34, arginine 78, and threonine 120 each bind NAD(+). Residues 149–151 (SCT), threonine 180, 209–210 (TG), and arginine 232 contribute to the D-glyceraldehyde 3-phosphate site. Cysteine 150 acts as the Nucleophile in catalysis. Asparagine 319 contributes to the NAD(+) binding site.

Belongs to the glyceraldehyde-3-phosphate dehydrogenase family. As to quaternary structure, homotetramer.

It localises to the cytoplasm. The enzyme catalyses D-glyceraldehyde 3-phosphate + phosphate + NAD(+) = (2R)-3-phospho-glyceroyl phosphate + NADH + H(+). Its pathway is carbohydrate degradation; glycolysis; pyruvate from D-glyceraldehyde 3-phosphate: step 1/5. Catalyzes the oxidative phosphorylation of glyceraldehyde 3-phosphate (G3P) to 1,3-bisphosphoglycerate (BPG) using the cofactor NAD. The first reaction step involves the formation of a hemiacetal intermediate between G3P and a cysteine residue, and this hemiacetal intermediate is then oxidized to a thioester, with concomitant reduction of NAD to NADH. The reduced NADH is then exchanged with the second NAD, and the thioester is attacked by a nucleophilic inorganic phosphate to produce BPG. This Haemophilus influenzae (strain ATCC 51907 / DSM 11121 / KW20 / Rd) protein is Glyceraldehyde-3-phosphate dehydrogenase (gapA).